A 76-amino-acid chain; its full sequence is Vasotab (76 aa).

Positions 1–20 are cleaved as a signal peptide; the sequence is MKFALFSVLVVLLIATFVAA. In terms of domain architecture, Kazal-like spans 21-76; that stretch reads DECPRICTADYRPVCGTPSGGRRSANRTFGNQCSLNAHNCLNKGDTYDKLHDGECK. Cystine bridges form between Cys23-Cys60, Cys27-Cys53, and Cys35-Cys75.

As to expression, expressed by the salivary gland.

It localises to the secreted. In terms of biological role, vasodilator protein that inhibits vasoconstriction of isolated rat femoral artery induced by phenylephrine. Since platelet aggregation and vasoconstriction are key hemostatic responses, particularly in small wounds, this protein likely participates in the antihemostatic responses during blood feeding. Blocks L-type calcium channels (Cav1/CACNA1) in left ventricular myocytes isolated from rat hearts. The chain is Vasotab from Hybomitra bimaculata (Horse fly).